Consider the following 383-residue polypeptide: E3 ubiquitin-protein ligase SPL2 (383 aa).

Residues Met1–Asp14 are Cytoplasmic-facing. Residues Ile15–Ser35 form a helical membrane-spanning segment. Topologically, residues Ala36–Asn269 are chloroplast intermembrane. The chain crosses the membrane as a helical span at residues Phe270–Ala290. Topologically, residues Val291–Ser383 are cytoplasmic. The segment at Cys331–Cys370 adopts an RING-type zinc-finger fold.

It is found in the plastid. The protein resides in the chloroplast outer membrane. The catalysed reaction is S-ubiquitinyl-[E2 ubiquitin-conjugating enzyme]-L-cysteine + [acceptor protein]-L-lysine = [E2 ubiquitin-conjugating enzyme]-L-cysteine + N(6)-ubiquitinyl-[acceptor protein]-L-lysine.. It participates in protein modification; protein ubiquitination. Possesses E3 ubiquitin-protein ligase activity. The polypeptide is E3 ubiquitin-protein ligase SPL2 (Arabidopsis thaliana (Mouse-ear cress)).